We begin with the raw amino-acid sequence, 266 residues long: bZIP transcription factor 12 (266 aa).

Residues 184 to 248 (AMQRQKRMIK…KELKEMVVPV (65 aa)) enclose the bZIP domain. The interval 187-205 (RQKRMIKNRESAARSRERK) is basic motif. Residues 202 to 244 (RERKQAYIAELESLVTQLEEENAKMFKEQEEQHQKRLKELKEM) adopt a coiled-coil conformation. The segment at 212–219 (LESLVTQL) is leucine-zipper.

It localises to the nucleus. Functionally, transcription activator that binds to the ABA-responsive elements (ABREs) in vitro. Involved in abiotic stress responses and abscisic acid (ABA) signaling. Involved in the signaling pathway that induces growth inhibition in response to D-allose. In Oryza sativa subsp. japonica (Rice), this protein is bZIP transcription factor 12.